Reading from the N-terminus, the 187-residue chain is dITP/XTP pyrophosphatase (187 aa).

7-12 (TGNKHK) lines the substrate pocket. Mg(2+)-binding residues include glutamate 36 and aspartate 64. Aspartate 64 functions as the Proton acceptor in the catalytic mechanism. Residues alanine 65, 140–143 (FAFD), lysine 163, and 168–169 (HR) each bind substrate.

Belongs to the HAM1 NTPase family. In terms of assembly, homodimer. The cofactor is Mg(2+).

The catalysed reaction is XTP + H2O = XMP + diphosphate + H(+). The enzyme catalyses dITP + H2O = dIMP + diphosphate + H(+). It catalyses the reaction ITP + H2O = IMP + diphosphate + H(+). In terms of biological role, pyrophosphatase that catalyzes the hydrolysis of nucleoside triphosphates to their monophosphate derivatives, with a high preference for the non-canonical purine nucleotides XTP (xanthosine triphosphate), dITP (deoxyinosine triphosphate) and ITP. Seems to function as a house-cleaning enzyme that removes non-canonical purine nucleotides from the nucleotide pool, thus preventing their incorporation into DNA/RNA and avoiding chromosomal lesions. The protein is dITP/XTP pyrophosphatase of Methanothermobacter marburgensis (strain ATCC BAA-927 / DSM 2133 / JCM 14651 / NBRC 100331 / OCM 82 / Marburg) (Methanobacterium thermoautotrophicum).